Here is an 89-residue protein sequence, read N- to C-terminus: Large ribosomal subunit protein bL27 (89 aa).

This sequence belongs to the bacterial ribosomal protein bL27 family.

This chain is Large ribosomal subunit protein bL27, found in Ruegeria sp. (strain TM1040) (Silicibacter sp.).